A 182-amino-acid polypeptide reads, in one-letter code: Translation initiation factor IF-3 (182 aa).

This sequence belongs to the IF-3 family. As to quaternary structure, monomer.

It is found in the cytoplasm. IF-3 binds to the 30S ribosomal subunit and shifts the equilibrium between 70S ribosomes and their 50S and 30S subunits in favor of the free subunits, thus enhancing the availability of 30S subunits on which protein synthesis initiation begins. In Thermosynechococcus vestitus (strain NIES-2133 / IAM M-273 / BP-1), this protein is Translation initiation factor IF-3.